Here is a 112-residue protein sequence, read N- to C-terminus: Truncated ankyrin repeat protein B25 (112 aa).

It belongs to the orthopoxviruses B25 protein family.

This chain is Truncated ankyrin repeat protein B25, found in Bos taurus (Bovine).